The sequence spans 222 residues: Peptide methionine sulfoxide reductase MsrA (222 aa).

The active site involves Cys60.

It belongs to the MsrA Met sulfoxide reductase family.

The catalysed reaction is L-methionyl-[protein] + [thioredoxin]-disulfide + H2O = L-methionyl-(S)-S-oxide-[protein] + [thioredoxin]-dithiol. It carries out the reaction [thioredoxin]-disulfide + L-methionine + H2O = L-methionine (S)-S-oxide + [thioredoxin]-dithiol. Functionally, has an important function as a repair enzyme for proteins that have been inactivated by oxidation. Catalyzes the reversible oxidation-reduction of methionine sulfoxide in proteins to methionine. In Pseudomonas putida (strain W619), this protein is Peptide methionine sulfoxide reductase MsrA.